Here is a 546-residue protein sequence, read N- to C-terminus: (-)-5-epieremophilene synthase STPS1 (546 aa).

Residues aspartate 299, aspartate 303, aspartate 442, threonine 446, and glutamate 450 each contribute to the Mg(2+) site. The DDXXD motif signature appears at 299-303 (DDTYD).

It belongs to the terpene synthase family. Tpsa subfamily. In terms of assembly, monomer. It depends on Mg(2+) as a cofactor. As to expression, highly expressed in leaves and at lower levels in flowers.

The catalysed reaction is (2E,6E)-farnesyl diphosphate = (-)-5-epi-eremophilene + diphosphate. It functions in the pathway secondary metabolite biosynthesis; terpenoid biosynthesis. Sesquiterpene synthase that catalyzes the conversion of farnesyl diphosphate to (-)-5-epi-eremophilene. This chain is (-)-5-epieremophilene synthase STPS1, found in Salvia miltiorrhiza (Chinese sage).